Consider the following 201-residue polypeptide: Glycerol-3-phosphate acyltransferase (201 aa).

6 helical membrane passes run 10-30 (MLIG…GLIL), 60-80 (LAAA…LIAA), 86-106 (AAIA…WIGF), 116-136 (LGVL…AWIV), 139-159 (LLTR…PIAL), and 166-186 (ALAA…RANI).

The protein belongs to the PlsY family. Probably interacts with PlsX.

Its subcellular location is the cell inner membrane. The catalysed reaction is an acyl phosphate + sn-glycerol 3-phosphate = a 1-acyl-sn-glycero-3-phosphate + phosphate. Its pathway is lipid metabolism; phospholipid metabolism. Catalyzes the transfer of an acyl group from acyl-phosphate (acyl-PO(4)) to glycerol-3-phosphate (G3P) to form lysophosphatidic acid (LPA). This enzyme utilizes acyl-phosphate as fatty acyl donor, but not acyl-CoA or acyl-ACP. This Brucella ovis (strain ATCC 25840 / 63/290 / NCTC 10512) protein is Glycerol-3-phosphate acyltransferase.